We begin with the raw amino-acid sequence, 644 residues long: Exoribonuclease 2 (644 aa).

The RNB domain maps to 189-516 (REDLTALDFV…NHRLLKAVIK (328 aa)). Residues 561–643 (DTRFAAEIVD…ETRSIIARPV (83 aa)) enclose the S1 motif domain.

It belongs to the RNR ribonuclease family. RNase II subfamily.

Its subcellular location is the cytoplasm. The enzyme catalyses Exonucleolytic cleavage in the 3'- to 5'-direction to yield nucleoside 5'-phosphates.. Its function is as follows. Involved in mRNA degradation. Hydrolyzes single-stranded polyribonucleotides processively in the 3' to 5' direction. The protein is Exoribonuclease 2 of Escherichia coli O45:K1 (strain S88 / ExPEC).